The sequence spans 76 residues: MKVSPRLNSALLLLFMILATVMGLVTVEARTCETSSNLFNGPCLSSSNCANVCHNEGFSDGDCRGFRRRCLCTRPC.

A signal peptide spans 1-29 (MKVSPRLNSALLLLFMILATVMGLVTVEA). Intrachain disulfides connect cysteine 32/cysteine 76, cysteine 43/cysteine 63, cysteine 49/cysteine 70, and cysteine 53/cysteine 72.

Belongs to the DEFL family.

It localises to the secreted. Confers broad-spectrum resistance to pathogens. The chain is Defensin-like protein 5 (PDF2.4) from Arabidopsis thaliana (Mouse-ear cress).